The primary structure comprises 429 residues: Serine--tRNA ligase (429 aa).

236 to 238 (TAE) contributes to the L-serine binding site. An ATP-binding site is contributed by 267–269 (RRE). E290 serves as a coordination point for L-serine. 354–357 (EISS) contributes to the ATP binding site. S390 contributes to the L-serine binding site.

Belongs to the class-II aminoacyl-tRNA synthetase family. Type-1 seryl-tRNA synthetase subfamily. As to quaternary structure, homodimer. The tRNA molecule binds across the dimer.

The protein localises to the cytoplasm. The catalysed reaction is tRNA(Ser) + L-serine + ATP = L-seryl-tRNA(Ser) + AMP + diphosphate + H(+). It catalyses the reaction tRNA(Sec) + L-serine + ATP = L-seryl-tRNA(Sec) + AMP + diphosphate + H(+). Its pathway is aminoacyl-tRNA biosynthesis; selenocysteinyl-tRNA(Sec) biosynthesis; L-seryl-tRNA(Sec) from L-serine and tRNA(Sec): step 1/1. Functionally, catalyzes the attachment of serine to tRNA(Ser). Is also able to aminoacylate tRNA(Sec) with serine, to form the misacylated tRNA L-seryl-tRNA(Sec), which will be further converted into selenocysteinyl-tRNA(Sec). In Gloeobacter violaceus (strain ATCC 29082 / PCC 7421), this protein is Serine--tRNA ligase.